A 68-amino-acid polypeptide reads, in one-letter code: ATP synthase subunit K, mitochondrial (68 aa).

The chain crosses the membrane as a helical span at residues 15–31 (HQLAIGTLGLLGLLVVP).

The protein belongs to the ATP19 family. F-type ATPases have 2 components, CF(1) - the catalytic core - and CF(0) - the membrane proton channel. In yeast, the dimeric form of ATP synthase consists of 17 polypeptides: alpha, beta, gamma, delta, epsilon, 4 (B), 5 (OSCP), 6 (A), 8, 9 (C), d, E (Tim11), f, g, h, i/j and k.

The protein resides in the mitochondrion inner membrane. Functionally, mitochondrial membrane ATP synthase (F(1)F(0) ATP synthase or Complex V) produces ATP from ADP in the presence of a proton gradient across the membrane which is generated by electron transport complexes of the respiratory chain. F-type ATPases consist of two structural domains, F(1) - containing the extramembraneous catalytic core and F(0) - containing the membrane proton channel, linked together by a central stalk and a peripheral stalk. During catalysis, ATP synthesis in the catalytic domain of F(1) is coupled via a rotary mechanism of the central stalk subunits to proton translocation. Part of the complex F(0) domain. Minor subunit located with subunit a in the membrane. The K chain binds the dimeric form by interacting with the G and E chains. In Saccharomyces cerevisiae (strain ATCC 204508 / S288c) (Baker's yeast), this protein is ATP synthase subunit K, mitochondrial (ATP19).